We begin with the raw amino-acid sequence, 59 residues long: Potassium channel toxin alpha-KTx 16.4 (59 aa).

The first 22 residues, 1–22 (MKILSIVLIALIICSISICTEA), serve as a signal peptide directing secretion. Disulfide bonds link C30/C51, C36/C56, and C40/C58.

Belongs to the short scorpion toxin superfamily. Potassium channel inhibitor family. Alpha-KTx 16 subfamily. As to expression, expressed by the venom gland.

Its subcellular location is the secreted. Its function is as follows. Weak inhibitor of voltage-gated potassium channel hKv1.3/KCNA3. This chain is Potassium channel toxin alpha-KTx 16.4, found in Mesobuthus eupeus (Lesser Asian scorpion).